Here is a 475-residue protein sequence, read N- to C-terminus: NAD-dependent histone deacetylase sir2 (475 aa).

Positions 1–12 (MASNPLDNNMPT) are enriched in polar residues. Residues 1–35 (MASNPLDNNMPTTPVEEKIPVASYSPSSSGSSSGA) form a disordered region. The span at 20–35 (PVASYSPSSSGSSSGA) shows a compositional bias: low complexity. Residue S55 is modified to Phosphoserine. One can recognise a Deacetylase sirtuin-type domain in the interval 139-436 (KLPHFNTFED…AGWLNELQAL (298 aa)). NAD(+)-binding positions include 164-183 (GAGI…NGFY) and 246-249 (QNID). The active-site Proton acceptor is the H266. C274, C277, C298, and C301 together coordinate Zn(2+). NAD(+) contacts are provided by residues 373–375 (GTS), 398–400 (SRT), and C416.

Belongs to the sirtuin family. Class I subfamily. Zn(2+) is required as a cofactor.

The protein localises to the nucleus. The protein resides in the chromosome. Its subcellular location is the centromere. It localises to the telomere. It carries out the reaction N(6)-acetyl-L-lysyl-[protein] + NAD(+) + H2O = 2''-O-acetyl-ADP-D-ribose + nicotinamide + L-lysyl-[protein]. Its function is as follows. Involved in silencing within the mating-type region, at the telomeres, and according to PubMed:12867036 also within centromeric DNA regions. Required for the localization of swi6 to the telomeres, silent mating type region, and according to PubMed:12867036 to the centromeric DNA regions. According to PubMed:15545655 not required for the localization of swi6 to centromeric foci. Deacetylates histone H3 on 'Lys-9' and 'Lys-16' of histone H4. This has a direct role in heterochromatin assembly. In Schizosaccharomyces pombe (strain 972 / ATCC 24843) (Fission yeast), this protein is NAD-dependent histone deacetylase sir2 (sir2).